The following is a 386-amino-acid chain: Cystathionine gamma-synthase (386 aa).

Lysine 198 carries the post-translational modification N6-(pyridoxal phosphate)lysine.

Belongs to the trans-sulfuration enzymes family. Homotetramer. Pyridoxal 5'-phosphate is required as a cofactor.

Its subcellular location is the cytoplasm. The enzyme catalyses O-succinyl-L-homoserine + L-cysteine = L,L-cystathionine + succinate + H(+). The protein operates within amino-acid biosynthesis; L-methionine biosynthesis via de novo pathway; L-cystathionine from O-succinyl-L-homoserine: step 1/1. Catalyzes the formation of L-cystathionine from O-succinyl-L-homoserine (OSHS) and L-cysteine, via a gamma-replacement reaction. In the absence of thiol, catalyzes gamma-elimination to form 2-oxobutanoate, succinate and ammonia. The protein is Cystathionine gamma-synthase (metB) of Escherichia coli (strain K12).